The sequence spans 360 residues: Glutamate--cysteine ligase (360 aa).

This sequence belongs to the glutamate--cysteine ligase type 2 family. YbdK subfamily.

The enzyme catalyses L-cysteine + L-glutamate + ATP = gamma-L-glutamyl-L-cysteine + ADP + phosphate + H(+). Functionally, catalyzes the synthesis of gamma-glutamylcysteine (gamma-GC), the main low-molecular-weight thiol compound instead of glutathione in halophilic archaea. This chain is Glutamate--cysteine ligase, found in Halobacterium salinarum (strain ATCC 29341 / DSM 671 / R1).